Reading from the N-terminus, the 102-residue chain is MDIDALSLNELKALRSKVDRAIVTYEERKKKEAFAELDEIARKMGYPLAEILTMVETKPRKTVAAKYANPANPSETWTGRGRKPKWVEAALASGKSLEDLTI.

Residues arginine 80 to lysine 85 mediate DNA binding.

The protein belongs to the histone-like protein H-NS family. In terms of assembly, homodimer that oligomerizes on DNA into higher-order complexes that form bridges between disparate regions of DNA compacting it.

The protein localises to the cytoplasm. It localises to the nucleoid. Its function is as follows. A dim-light trans-acting activator of Puf and Puh expression, that has no effect on the expression of the Puc operon. Responsible for regulating light-harvesting-I and reaction center structural gene expression differentially from that of light-harvesting-II expression in response to alterations in light. Proper light regulation of light-harvesting and reaction center polypeptide synthesis is an important physiological trait that enables cells to adapt to ever-changing environmental conditions of light intensity. In Rhodobacter capsulatus (Rhodopseudomonas capsulata), this protein is Trans-acting regulatory protein HvrA (hvrA).